Consider the following 258-residue polypeptide: Spectinomycin 9-adenylyltransferase (258 aa).

The catalysed reaction is spectinomycin + ATP = 9-O-adenylylspectinomycin + diphosphate. Mediates bacterial resistance to spectinomycin, is probably a spectinomycin 9-adenylyltransferase. This is Spectinomycin 9-adenylyltransferase from Campylobacter jejuni.